The sequence spans 424 residues: Glutamyl-tRNA reductase (424 aa).

Substrate is bound by residues 53 to 56 (TCNR), serine 111, 116 to 118 (EPQ), and glutamine 122. Cysteine 54 functions as the Nucleophile in the catalytic mechanism. 191–196 (GAGEMI) contributes to the NADP(+) binding site.

The protein belongs to the glutamyl-tRNA reductase family. In terms of assembly, homodimer.

It carries out the reaction (S)-4-amino-5-oxopentanoate + tRNA(Glu) + NADP(+) = L-glutamyl-tRNA(Glu) + NADPH + H(+). It functions in the pathway porphyrin-containing compound metabolism; protoporphyrin-IX biosynthesis; 5-aminolevulinate from L-glutamyl-tRNA(Glu): step 1/2. Catalyzes the NADPH-dependent reduction of glutamyl-tRNA(Glu) to glutamate 1-semialdehyde (GSA). In Bordetella bronchiseptica (strain ATCC BAA-588 / NCTC 13252 / RB50) (Alcaligenes bronchisepticus), this protein is Glutamyl-tRNA reductase.